The following is a 165-amino-acid chain: LOB domain-containing protein 21 (165 aa).

Residues S10 to L111 form the LOB domain.

It belongs to the LOB domain-containing protein family.

The polypeptide is LOB domain-containing protein 21 (LBD21) (Arabidopsis thaliana (Mouse-ear cress)).